Consider the following 198-residue polypeptide: tRNA (cytidine(56)-2'-O)-methyltransferase (198 aa).

S-adenosyl-L-methionine is bound by residues Leu-81, 110–114, and 128–135; these read GAEKV and IGNQPHSE. The interval 178 to 198 is disordered; the sequence is DAKQAEASGEGASRKNGQLPS.

This sequence belongs to the aTrm56 family. Homodimer.

It is found in the cytoplasm. It catalyses the reaction cytidine(56) in tRNA + S-adenosyl-L-methionine = 2'-O-methylcytidine(56) in tRNA + S-adenosyl-L-homocysteine + H(+). Functionally, specifically catalyzes the AdoMet-dependent 2'-O-ribose methylation of cytidine at position 56 in tRNAs. In Pyrococcus abyssi (strain GE5 / Orsay), this protein is tRNA (cytidine(56)-2'-O)-methyltransferase.